Here is an 880-residue protein sequence, read N- to C-terminus: Protein transport protein SEC23 A (880 aa).

Residues 1–13 (MANLPKSSVNYPG) show a composition bias toward polar residues. The tract at residues 1–95 (MANLPKSSVN…PPGPPVFNTP (95 aa)) is disordered. Pro residues predominate over residues 20–36 (PNRPSPQPDRTPVPHSP). The segment covering 57 to 70 (MSSPSMKSPSLLSP) has biased composition (low complexity). 4 residues coordinate Zn(2+): Cys204, Cys207, Cys226, and Cys229. The zinc finger-like stretch occupies residues 204-229 (CLNCGAYSNPYSSILIGSGQWQCVIC).

This sequence belongs to the SEC23/SEC24 family. SEC24 subfamily. Component of the coat protein complex II (COPII), composed of at least five proteins: the Sec23/24 complex, the Sec13/31 complex and Sar1. Mostly expressed in seedlings, roots, cotyledons, leaves, trichomes, leaf primordia and flowers, and, to a lower extent, in mature siliques.

The protein resides in the cytoplasmic vesicle. Its subcellular location is the COPII-coated vesicle membrane. The protein localises to the endoplasmic reticulum membrane. It is found in the membrane. Functionally, component of the coat protein complex II (COPII) which promotes the formation of transport vesicles from the endoplasmic reticulum (ER). The coat has two main functions, the physical deformation of the endoplasmic reticulum membrane into vesicles and the selection of cargo molecules. May contribute to COPII-coated vesicles formation and ER-Golgi vesicle transport. Together with SEC23D, essential for pollen wall development and exine patterning, probably by regulating endoplasmic reticulum (ER) export of lipids and proteins (e.g. sporopollenin) necessary for pollen wall formation. Also involved in plastid physiology in anther tapetal cells. This chain is Protein transport protein SEC23 A, found in Arabidopsis thaliana (Mouse-ear cress).